The chain runs to 355 residues: dTDP-D-glucose 4,6-dehydratase (355 aa).

Substrate is bound at residue Thr-142. Asp-143 functions as the Proton donor in the catalytic mechanism. Residues Glu-144 and Tyr-166 each act as proton acceptor in the active site.

The protein belongs to the NAD(P)-dependent epimerase/dehydratase family. dTDP-glucose dehydratase subfamily. NAD(+) is required as a cofactor.

It carries out the reaction dTDP-alpha-D-glucose = dTDP-4-dehydro-6-deoxy-alpha-D-glucose + H2O. This chain is dTDP-D-glucose 4,6-dehydratase (TGDS), found in Bos taurus (Bovine).